The primary structure comprises 346 residues: Tubulin-specific chaperone C (346 aa).

M1 carries the N-acetylmethionine modification. Residues 1–26 form a disordered region; it reads MESVSCSAAAVRTGDMESQRDLSLVP. A phosphoserine mark is found at S80 and S168. The segment at 140–171 is disordered; it reads KTRGKDAASSTKVDAAPGIPPAVESIQDSPLP. Residues 171–323 form the C-CAP/cofactor C-like domain; that stretch reads PKKAEGDLGP…NWNDVDDFNW (153 aa).

It belongs to the TBCC family. In terms of assembly, supercomplex made of cofactors A to E. Cofactors A and D function by capturing and stabilizing tubulin in a quasi-native conformation. Cofactor E binds to the cofactor D-tubulin complex; interaction with cofactor C then causes the release of tubulin polypeptides that are committed to the native state. Expressed in the retina. Expressed in the rod and cone photoreceptors, extending from the inner segments (IS), through the outer nuclear layer (ONL) and into the synapses in the outer plexiform layer (OPL). Strongly expressed to the photoreceptor connecting cilium at the tips of the IS (at protein level).

It localises to the cytoplasm. Tubulin-folding protein; involved in the final step of the tubulin folding pathway. The chain is Tubulin-specific chaperone C (TBCC) from Homo sapiens (Human).